Here is a 179-residue protein sequence, read N- to C-terminus: Large ribosomal subunit protein uL5 (179 aa).

This sequence belongs to the universal ribosomal protein uL5 family. Part of the 50S ribosomal subunit; part of the 5S rRNA/L5/L18/L25 subcomplex. Contacts the 5S rRNA and the P site tRNA. Forms a bridge to the 30S subunit in the 70S ribosome.

In terms of biological role, this is one of the proteins that bind and probably mediate the attachment of the 5S RNA into the large ribosomal subunit, where it forms part of the central protuberance. In the 70S ribosome it contacts protein S13 of the 30S subunit (bridge B1b), connecting the 2 subunits; this bridge is implicated in subunit movement. Contacts the P site tRNA; the 5S rRNA and some of its associated proteins might help stabilize positioning of ribosome-bound tRNAs. The polypeptide is Large ribosomal subunit protein uL5 (Actinobacillus pleuropneumoniae serotype 5b (strain L20)).